Reading from the N-terminus, the 190-residue chain is uncharacterized protein (190 aa).

Topologically, residues 1-16 are cytoplasmic; that stretch reads MAILPEFISQTPPVTR. A helical transmembrane segment spans residues 17–37; sequence YIVLGTLFTTLAVNFGYVSDL. At 38-55 the chain is on the lumenal side; the sequence is KIFFNWKLFLAKGEYWRA. The helical transmembrane segment at 56 to 76 threads the bilayer; it reads ITTFLYVGPFGLELILYLSFL. Residues 77–98 are Cytoplasmic-facing; sequence LRFMSMLERSSPPPQTQSFLKT. A helical transmembrane segment spans residues 99–119; that stretch reads VLIVWFSLLVTSYFSYMPFAA. At 120-138 the chain is on the lumenal side; it reads SYFSFTMLYIWSWKHPLYR. The chain crosses the membrane as a helical span at residues 139–159; the sequence is ISILGLFDVKAPYVPWVMVLL. The Cytoplasmic segment spans residues 160–163; it reads RWLR. A helical membrane pass occupies residues 164 to 184; sequence TGIFPLLDLISALIGHVYFFV. At 185 to 190 the chain is on the lumenal side; the sequence is TDFSTV.

The protein belongs to the derlin family.

It localises to the endoplasmic reticulum membrane. This is an uncharacterized protein from Schizosaccharomyces pombe (strain 972 / ATCC 24843) (Fission yeast).